A 251-amino-acid polypeptide reads, in one-letter code: Triosephosphate isomerase (251 aa).

8-10 (NWK) contributes to the substrate binding site. Catalysis depends on His-97, which acts as the Electrophile. Catalysis depends on Glu-170, which acts as the Proton acceptor. Substrate-binding positions include Gly-176, Ser-215, and 236–237 (GG).

This sequence belongs to the triosephosphate isomerase family. Homodimer.

Its subcellular location is the cytoplasm. It carries out the reaction D-glyceraldehyde 3-phosphate = dihydroxyacetone phosphate. It participates in carbohydrate biosynthesis; gluconeogenesis. Its pathway is carbohydrate degradation; glycolysis; D-glyceraldehyde 3-phosphate from glycerone phosphate: step 1/1. Its function is as follows. Involved in the gluconeogenesis. Catalyzes stereospecifically the conversion of dihydroxyacetone phosphate (DHAP) to D-glyceraldehyde-3-phosphate (G3P). The chain is Triosephosphate isomerase from Nitratidesulfovibrio vulgaris (strain ATCC 29579 / DSM 644 / CCUG 34227 / NCIMB 8303 / VKM B-1760 / Hildenborough) (Desulfovibrio vulgaris).